Reading from the N-terminus, the 242-residue chain is Anti-Pycsar protein Apyc1 (242 aa).

Residues 17–216 (FNNNALIEQD…EMQSIIKLMH (200 aa)) are beta-lactamase-like. 7 residues coordinate Zn(2+): His-59, His-61, Asp-63, His-64, His-142, Asp-162, and His-216.

This sequence belongs to the anti-Pycsar protein Apyc1 family. As to quaternary structure, homodimer. Zn(2+) serves as cofactor.

The enzyme catalyses 3',5'-cyclic CMP + H2O = CMP + H(+). It carries out the reaction 3',5'-cyclic UMP + H2O = UMP + H(+). Counteracts the endogenous Pycsar antiviral defense system. Phosphodiesterase that enables metal-dependent hydrolysis of host cyclic nucleotide Pycsar defense signals such as cCMP and cUMP. The chain is Anti-Pycsar protein Apyc1 from Saccharibacillus brassicae.